A 62-amino-acid polypeptide reads, in one-letter code: Sperm protamine P1 (62 aa).

The tract at residues 1 to 62 (MARYRRHSRS…RYSRRGRRRY (62 aa)) is disordered.

It belongs to the protamine P1 family. In terms of tissue distribution, testis.

Its subcellular location is the nucleus. It is found in the chromosome. Functionally, protamines substitute for histones in the chromatin of sperm during the haploid phase of spermatogenesis. They compact sperm DNA into a highly condensed, stable and inactive complex. The polypeptide is Sperm protamine P1 (PRM1) (Neophascogale lorentzii (Long-clawed marsupial mouse)).